We begin with the raw amino-acid sequence, 366 residues long: Zinc finger CCCH domain-containing protein 11 (366 aa).

Positions 43-66 (LHQAVQPKPDPTKTAAKKKKEEEK) are disordered. A coiled-coil region spans residues 54-79 (TKTAAKKKKEEEKAREKELNDLFKVA). C3H1-type zinc fingers lie at residues 90–117 (DPKS…HDLN) and 160–198 (KPTD…HALP). Residues 208 to 234 (KALLEEESEKIAIEDEIEDQRKKVKTT) are a coiled coil. A disordered region spans residues 293-338 (YERQEESEANEEPSNKNQDEGPSSSTSNGKEVEESDDEDINIDDDL). Residues 312–321 (EGPSSSTSNG) show a composition bias toward polar residues. The span at 325–338 (EESDDEDINIDDDL) shows a compositional bias: acidic residues.

The protein is Zinc finger CCCH domain-containing protein 11 of Oryza sativa subsp. japonica (Rice).